The chain runs to 105 residues: N(4)-acetylcytidine amidohydrolase (105 aa).

One can recognise an ASCH domain in the interval 7-93; sequence TFFERFEHDI…VIAEIYPGLE (87 aa). Lysine 21 acts as the Proton acceptor in catalysis. The active-site Nucleophile is threonine 24. The active-site Proton donor is glutamate 74.

The protein belongs to the N(4)-acetylcytidine amidohydrolase family.

It carries out the reaction N(4)-acetylcytidine + H2O = cytidine + acetate + H(+). The catalysed reaction is N(4)-acetyl-2'-deoxycytidine + H2O = 2'-deoxycytidine + acetate + H(+). The enzyme catalyses N(4)-acetylcytosine + H2O = cytosine + acetate + H(+). Its function is as follows. Catalyzes the hydrolysis of N(4)-acetylcytidine (ac4C). The chain is N(4)-acetylcytidine amidohydrolase from Shewanella baltica (strain OS223).